Here is a 466-residue protein sequence, read N- to C-terminus: UDP-N-acetylmuramoylalanine--D-glutamate ligase (466 aa).

An ATP-binding site is contributed by 124 to 130 (GSDGKTT).

This sequence belongs to the MurCDEF family.

It is found in the cytoplasm. It catalyses the reaction UDP-N-acetyl-alpha-D-muramoyl-L-alanine + D-glutamate + ATP = UDP-N-acetyl-alpha-D-muramoyl-L-alanyl-D-glutamate + ADP + phosphate + H(+). It participates in cell wall biogenesis; peptidoglycan biosynthesis. In terms of biological role, cell wall formation. Catalyzes the addition of glutamate to the nucleotide precursor UDP-N-acetylmuramoyl-L-alanine (UMA). This Acetivibrio thermocellus (strain ATCC 27405 / DSM 1237 / JCM 9322 / NBRC 103400 / NCIMB 10682 / NRRL B-4536 / VPI 7372) (Clostridium thermocellum) protein is UDP-N-acetylmuramoylalanine--D-glutamate ligase.